A 249-amino-acid chain; its full sequence is uncharacterized protein (249 aa).

The protein belongs to the AIM2 family.

It localises to the cytoplasm. Its subcellular location is the nucleus. This is an uncharacterized protein from Schizosaccharomyces pombe (strain 972 / ATCC 24843) (Fission yeast).